The chain runs to 357 residues: Chaperone protein DnaJ (357 aa).

The 66-residue stretch at 4 to 69 (DYYAILGVDR…QKRKQYDETG (66 aa)) folds into the J domain. The CR-type zinc-finger motif lies at 132–213 (GASKNVKYRR…CHGTGTVSKN (82 aa)). 8 residues coordinate Zn(2+): cysteine 145, cysteine 148, cysteine 161, cysteine 164, cysteine 187, cysteine 190, cysteine 201, and cysteine 204. CXXCXGXG motif repeat units lie at residues 145-152 (CEHCSGTG), 161-168 (CPTCHGSG), 187-194 (CRTCHGRG), and 201-208 (CTVCHGTG).

Belongs to the DnaJ family. As to quaternary structure, homodimer. Zn(2+) is required as a cofactor.

The protein resides in the cytoplasm. Participates actively in the response to hyperosmotic and heat shock by preventing the aggregation of stress-denatured proteins and by disaggregating proteins, also in an autonomous, DnaK-independent fashion. Unfolded proteins bind initially to DnaJ; upon interaction with the DnaJ-bound protein, DnaK hydrolyzes its bound ATP, resulting in the formation of a stable complex. GrpE releases ADP from DnaK; ATP binding to DnaK triggers the release of the substrate protein, thus completing the reaction cycle. Several rounds of ATP-dependent interactions between DnaJ, DnaK and GrpE are required for fully efficient folding. Also involved, together with DnaK and GrpE, in the DNA replication of plasmids through activation of initiation proteins. The polypeptide is Chaperone protein DnaJ (Picrophilus torridus (strain ATCC 700027 / DSM 9790 / JCM 10055 / NBRC 100828 / KAW 2/3)).